A 374-amino-acid chain; its full sequence is Pectinesterase (374 aa).

A signal peptide spans 1–31; it reads MVKLLNSTRELSINALSMLNSFGDMVAQATG. 2 N-linked (GlcNAc...) asparagine glycosylation sites follow: Asn58 and Asn124. Substrate is bound by residues Thr133 and Gln163. Asp186 serves as the catalytic Proton donor. Residues Cys200 and Cys220 are joined by a disulfide bond. The active-site Nucleophile is Asp207. N-linked (GlcNAc...) asparagine glycosylation is present at Asn230. The substrate site is built by Arg275 and Trp277. N-linked (GlcNAc...) asparagine glycosylation is present at Asn303.

This sequence belongs to the pectinesterase family. Pollen, and at much lower levels in pistils and petals.

It is found in the secreted. It localises to the cell wall. It catalyses the reaction [(1-&gt;4)-alpha-D-galacturonosyl methyl ester](n) + n H2O = [(1-&gt;4)-alpha-D-galacturonosyl](n) + n methanol + n H(+). It functions in the pathway glycan metabolism; pectin degradation; 2-dehydro-3-deoxy-D-gluconate from pectin: step 1/5. May play a role in pollen germination and/or tube growth. The chain is Pectinesterase (PPE1) from Petunia integrifolia (Violet-flowered petunia).